The chain runs to 62 residues: uncharacterized protein (62 aa).

This is an uncharacterized protein from Sulfolobus islandicus filamentous virus (isolate Iceland/Hveragerdi) (SIFV).